The following is a 377-amino-acid chain: Protein-tyrosine sulfotransferase 2 (377 aa).

Residues methionine 1–alanine 8 are Cytoplasmic-facing. Residues leucine 9–glycine 25 traverse the membrane as a helical; Signal-anchor for type II membrane protein segment. Over glutamine 26–serine 377 the chain is Lumenal. A 3'-phosphoadenylyl sulfate-binding site is contributed by arginine 78 to threonine 82. An intrachain disulfide couples cysteine 96 to cysteine 156. Glutamate 99 (proton donor/acceptor) is an active-site residue. The interaction with peptide substrate stretch occupies residues arginine 101 to arginine 105. Residues arginine 183, serine 191, and arginine 195 each contribute to the 3'-phosphoadenylyl sulfate site. Cysteines 225 and 233 form a disulfide. Residues tyrosine 238, serine 285 to asparagine 294, and lysine 300 contribute to the 3'-phosphoadenylyl sulfate site. Asparagine 343 and asparagine 368 each carry an N-linked (GlcNAc...) asparagine glycan.

The protein belongs to the protein sulfotransferase family. In terms of assembly, homodimer. Can also form heterodimers with TPST1. N-glycosylated.

The protein localises to the golgi apparatus membrane. The enzyme catalyses L-tyrosyl-[protein] + 3'-phosphoadenylyl sulfate = O-sulfo-L-tyrosine-[protein] + adenosine 3',5'-bisphosphate + H(+). In terms of biological role, catalyzes the O-sulfation of tyrosine residues within acidic motifs of polypeptides, using 3'-phosphoadenylyl sulfate (PAPS) as cosubstrate. The polypeptide is Protein-tyrosine sulfotransferase 2 (TPST2) (Bos taurus (Bovine)).